Here is a 390-residue protein sequence, read N- to C-terminus: Putative gustatory receptor 36c (390 aa).

At 1-4 the chain is on the cytoplasmic side; the sequence is MDLE. A helical membrane pass occupies residues 5-25; that stretch reads SFLLGAVYYYGLFIGLSNFEF. The Extracellular portion of the chain corresponds to 26–36; the sequence is DWNTGRVFTKK. A helical membrane pass occupies residues 37–57; the sequence is WSTLYAIALDSCIFALYIYHW. Topologically, residues 58–75 are cytoplasmic; sequence TGNTNIVNAIFGRANMLH. Residues 76-96 form a helical membrane-spanning segment; the sequence is EYVVAILTGLRIVTGLFTLIL. Residues 97-132 are Extracellular-facing; sequence RWYQRCKMMDLASKVVRMYVARPQVRRMSRWGILTK. The helical transmembrane segment at 133 to 153 threads the bilayer; the sequence is FIFGSITDGLQMAMVLSAMGS. The Cytoplasmic portion of the chain corresponds to 154 to 165; sequence VDSQFYLGLGLQ. Residues 166–186 form a helical membrane-spanning segment; it reads YWMFVILNMAMMQQHMIMLFV. Residues 187 to 254 lie on the Extracellular side of the membrane; sequence RTQFQLINTE…MEEVFGIQGA (68 aa). A helical transmembrane segment spans residues 255-275; that stretch reads MTYGGYYLSSVGTCYLAYSIL. Residues 276–288 are Cytoplasmic-facing; it reads KHGYENLSMTLST. The helical transmembrane segment at 289–309 threads the bilayer; that stretch reads VILAYSWCFFYYLDGMLNLSV. At 310-390 the chain is on the extracellular side; sequence MLHVQDDYWE…FLIQYDIEHF (81 aa).

The protein belongs to the insect chemoreceptor superfamily. Gustatory receptor (GR) family. Gr22e subfamily. In terms of tissue distribution, expressed in neurons of the terminal external chemosensory organ of larvae.

The protein resides in the cell membrane. Functionally, probable gustatory receptor which mediates acceptance or avoidance behavior, depending on its substrates. The chain is Putative gustatory receptor 36c (Gr36c) from Drosophila melanogaster (Fruit fly).